Consider the following 130-residue polypeptide: Ribosome biogenesis inhibitor MINAS-60 (130 aa).

The disordered stretch occupies residues 61–130 (SRVRRIPTRP…RRRRPVTSSC (70 aa)). Positions 109-130 (KGRRRRRRRMRRRRRRPVTSSC) are enriched in basic residues.

In terms of assembly, interacts with 60S ribosome assembly factors GTPBP4 and MRTO4.

It localises to the nucleus. It is found in the nucleolus. Acts as a late-stage inhibitor of pre-60S ribosome assembly by preventing pre-60S ribosome export from nucleus. The chain is Ribosome biogenesis inhibitor MINAS-60 from Homo sapiens (Human).